A 1054-amino-acid chain; its full sequence is FERM, ARHGEF and pleckstrin domain-containing protein 2 (1054 aa).

Residues 44-324 (LHLRVKLLDN…EYHTFFRLLD (281 aa)) form the FERM domain. 2 positions are modified to phosphoserine: Ser-389 and Ser-439. Residues 421 to 527 (EFKDSSSSLT…GAGMDCEEPR (107 aa)) form a disordered region. The span at 468 to 492 (PGPGLSTKSPQPSPSSRKSPLSLSP) shows a compositional bias: low complexity. In terms of domain architecture, DH spans 535-726 (EAYFIVKEIL…TEVTTTLQHI (192 aa)). In terms of domain architecture, PH 1 spans 755 to 852 (EFIREGCLHK…WMLDLNSAIQ (98 aa)). The tract at residues 856–894 (SGGDTAPALPGRTVCTRPPRSPNEVSLEQESEDDARGVR) is disordered. In terms of domain architecture, PH 2 spans 929 to 1026 (ENQLSGYLLR…WMEVIQGASS (98 aa)). The disordered stretch occupies residues 1029–1054 (GRAPSIVQDGPQPSSGLEGMVRGKEE).

Interacts with PLXNA1. Interaction with PLXNA1 or PIP5K1C lowers its guanine nucleotide exchange activity. Dissociates from PLXNA1 when SEMA3A binds to the receptor. Interacts with PIP5K1C via its FERM domain. The interaction with PIP5K1C is enhanced by SEMA3A binding. Interacts with RAC1.

Functionally, functions as a guanine nucleotide exchange factor that activates RAC1. May have relatively low activity. Plays a role in the response to class 3 semaphorins and remodeling of the actin cytoskeleton. Plays a role in TNFSF11-mediated osteoclast differentiation, especially in podosome rearrangement and reorganization of the actin cytoskeleton. Regulates the activation of ITGB3, integrin signaling and cell adhesion. This Homo sapiens (Human) protein is FERM, ARHGEF and pleckstrin domain-containing protein 2 (FARP2).